The following is a 94-amino-acid chain: Phosphoribosyl-ATP pyrophosphatase (94 aa).

It belongs to the PRA-PH family.

The protein resides in the cytoplasm. The catalysed reaction is 1-(5-phospho-beta-D-ribosyl)-ATP + H2O = 1-(5-phospho-beta-D-ribosyl)-5'-AMP + diphosphate + H(+). It functions in the pathway amino-acid biosynthesis; L-histidine biosynthesis; L-histidine from 5-phospho-alpha-D-ribose 1-diphosphate: step 2/9. The polypeptide is Phosphoribosyl-ATP pyrophosphatase (Pyrobaculum arsenaticum (strain DSM 13514 / JCM 11321 / PZ6)).